A 251-amino-acid polypeptide reads, in one-letter code: Small ribosomal subunit protein uS2 (251 aa).

It belongs to the universal ribosomal protein uS2 family.

This Synechococcus elongatus (strain ATCC 33912 / PCC 7942 / FACHB-805) (Anacystis nidulans R2) protein is Small ribosomal subunit protein uS2.